The primary structure comprises 203 residues: uncharacterized protein (203 aa).

Residues 9–29 (LVVLFTIVTFGLVSPPAALMA) form a helical membrane-spanning segment.

The protein localises to the membrane. This is an uncharacterized protein from Bacillus subtilis (strain 168).